A 504-amino-acid chain; its full sequence is ATP synthase subunit alpha, chloroplastic (504 aa).

Residue 170 to 177 participates in ATP binding; it reads GDRQTGKT.

The protein belongs to the ATPase alpha/beta chains family. As to quaternary structure, F-type ATPases have 2 components, CF(1) - the catalytic core - and CF(0) - the membrane proton channel. CF(1) has five subunits: alpha(3), beta(3), gamma(1), delta(1), epsilon(1). CF(0) has four main subunits: a, b, b' and c.

The protein resides in the plastid. The protein localises to the chloroplast thylakoid membrane. It catalyses the reaction ATP + H2O + 4 H(+)(in) = ADP + phosphate + 5 H(+)(out). Its function is as follows. Produces ATP from ADP in the presence of a proton gradient across the membrane. The alpha chain is a regulatory subunit. This chain is ATP synthase subunit alpha, chloroplastic, found in Jasminum nudiflorum (Winter jasmine).